Here is a 170-residue protein sequence, read N- to C-terminus: Putative pre-16S rRNA nuclease (170 aa).

The interval 1-25 (MVPAQHRPPDRPGDPAHDPGRGRRL) is disordered. Over residues 7-21 (RPPDRPGDPAHDPGR) the composition is skewed to basic and acidic residues.

Belongs to the YqgF nuclease family.

The protein resides in the cytoplasm. In terms of biological role, could be a nuclease involved in processing of the 5'-end of pre-16S rRNA. The sequence is that of Putative pre-16S rRNA nuclease from Mycobacterium tuberculosis (strain ATCC 25177 / H37Ra).